A 700-amino-acid polypeptide reads, in one-letter code: MAGMAAALAKERAAAAGAGRHGQAVPYLGQDFGALRRECLQGGRLFHDPSFPAGPAALGYRELGPNSYKTKGVVWCRPTELCSCPRFIAGGATRTDICQGALGDCWLLAAIASLTLNEEILARVVPRDQSFQDEYAGIFHFQFWQYGEWVDVVVDDRLPTKNGELLFVHSAEGSEFWSALLEKAYAKLNGSYEALSGGTTTEGFEDFTGGIAEWYELQKAPPNLFKIIQKALQKGSLLGCSIDITSAAETEAVTSQKLVKGHAYSVTGAEEVNFRGSIQKLIRIRNPWGEVEWTGKWNDNCPNWSGVDPEVRERLTRRHEDGEFWMAFNDFLRHYSRLEICNLTPDTLASDRYKKWSLLKLDGNWRRGATAGGCRNYPNTFWTNPQYLIKLEEEDEDPDDPEGGCTFLIGLIQKHRRKQRKMGEDMHTIGFAIYEVPPEFSGQTNIHLSKNFFLTNKAREKSNTFINLREVLNRFKLPAGEYIIVPSTFEPNLNGDFCLRVFSEKNANSTVIDDEIEANFEETEIDEDDIEPSFKKLFGQLAGSDAEISAFELRSILNKILAKRQDIKSDGFSIETCKIMVDLLDNDGSGKLGLKEFHTLWTKIQKYQKIYREIDVDRSGTMNSYEMRRALEAAGFKLSCQLHQIIVARFADEDLIIDFDNCVRCLIRLETLYKMFRKLDTEKTGTIELNLINWLFFTVI.

Residues 2-19 (AGMAAALAKERAAAAGAG) constitute a propeptide, anchors to the small subunit. Residues 45-344 (LFHDPSFPAG…YSRLEICNLT (300 aa)) enclose the Calpain catalytic domain. Ca(2+) contacts are provided by Gly-91 and Asp-96. Residue Cys-105 is part of the active site. Positions 175, 229, and 230 each coordinate Ca(2+). Residues His-262 and Asn-286 contribute to the active site. The Ca(2+) site is built by Glu-292, Asp-299, and Glu-323. The domain III stretch occupies residues 345–514 (PDTLASDRYK…KNANSTVIDD (170 aa)). A linker region spans residues 515-529 (EIEANFEETEIDEDD). The segment at 530–700 (IEPSFKKLFG…LINWLFFTVI (171 aa)) is domain IV. Residues Ala-542, Asp-545, Glu-547, Glu-552, Asp-585, Asp-587, Ser-589, Lys-591, Glu-596, Asp-615, Asp-617, Ser-619, Thr-621, Glu-626, Asp-658, and Asn-661 each coordinate Ca(2+). 2 consecutive EF-hand domains span residues 572 to 605 (FSIE…TKIQ) and 602 to 637 (TKIQ…AGFK). One can recognise an EF-hand 3 domain in the interval 667–700 (IRLETLYKMFRKLDTEKTGTIELNLINWLFFTVI).

This sequence belongs to the peptidase C2 family. As to quaternary structure, forms a heterodimer with a small (regulatory) subunit (CAPNS1). Ca(2+) is required as a cofactor. In terms of tissue distribution, ubiquitous.

It is found in the cytoplasm. The protein localises to the cell membrane. It carries out the reaction Broad endopeptidase specificity.. Activated by 200-1000 micromolar concentrations of calcium and inhibited by calpastatin. Its function is as follows. Calcium-regulated non-lysosomal thiol-protease which catalyze limited proteolysis of substrates involved in cytoskeletal remodeling and signal transduction. The chain is Calpain-2 catalytic subunit (CAPN2) from Gallus gallus (Chicken).